We begin with the raw amino-acid sequence, 698 residues long: Polyphosphate kinase (698 aa).

Residue asparagine 63 participates in ATP binding. Residues arginine 390 and arginine 420 each coordinate Mg(2+). The active-site Phosphohistidine intermediate is histidine 450. Residues tyrosine 483, arginine 579, and histidine 607 each coordinate ATP.

The protein belongs to the polyphosphate kinase 1 (PPK1) family. The cofactor is Mg(2+). An intermediate of this reaction is the autophosphorylated ppk in which a phosphate is covalently linked to a histidine residue through a N-P bond.

The enzyme catalyses [phosphate](n) + ATP = [phosphate](n+1) + ADP. In terms of biological role, catalyzes the reversible transfer of the terminal phosphate of ATP to form a long-chain polyphosphate (polyP). The chain is Polyphosphate kinase from Xylella fastidiosa (strain 9a5c).